A 359-amino-acid chain; its full sequence is MANLPIEKMRELERRFGEIEARMSAGPAADVYVKLASEYSELQPVVAKIRDYEKAIAEASDLEAMLADKSVDREMRDLADMELPEVKERIEVLEQDIQILLLPKDAADEKSAILEIRAGTGGSEAALFGGDLFRMYERFAANNGWKVEILSASDGEAGGYKEVIATITGKGVFSRLKFESGVHRVQRVPETEAGGRIHTSAATVAVLPEAEEIDIEIRAEDIRIDTMRSSGAGGQHVNTTDSAVRITHLPSGIVVTSSEKSQHQNRAKAMQVLRSRLFDMERQRADSERSADRKSQVGSGDRSERIRTYNFPQGRVTDHRINLTLYKLDRMMEGEIDEVVDALRADYQASQLAQLGEQA.

Gln235 bears the N5-methylglutamine mark. The interval 282-306 is disordered; sequence RQRADSERSADRKSQVGSGDRSERI.

Belongs to the prokaryotic/mitochondrial release factor family. Post-translationally, methylated by PrmC. Methylation increases the termination efficiency of RF1.

It is found in the cytoplasm. Functionally, peptide chain release factor 1 directs the termination of translation in response to the peptide chain termination codons UAG and UAA. The polypeptide is Peptide chain release factor 1 (Rhizobium rhizogenes (strain K84 / ATCC BAA-868) (Agrobacterium radiobacter)).